A 349-amino-acid polypeptide reads, in one-letter code: Alpha-centractin (349 aa).

An N-acetylmethionine modification is found at methionine 1.

Belongs to the actin family. ARP1 subfamily. In terms of assembly, part of the ACTR1A/ACTB filament around which the dynactin complex is built. The filament contains 8 copies of ACTR1A and 1 ACTB. Interacts with dynein and adapters such as BICD2. Interacts with BCCIP (isoform 2/alpha).

It is found in the cytoplasm. The protein resides in the cytoskeleton. It localises to the microtubule organizing center. Its subcellular location is the centrosome. The protein localises to the cell cortex. Part of the ACTR1A/ACTB filament around which the dynactin complex is built. The dynactin multiprotein complex activates the molecular motor dynein for ultra-processive transport along microtubules. This is Alpha-centractin (ACTR1A) from Sus scrofa (Pig).